The sequence spans 103 residues: ATP-dependent Clp protease adapter protein ClpS (103 aa).

This sequence belongs to the ClpS family. In terms of assembly, binds to the N-terminal domain of the chaperone ClpA.

Involved in the modulation of the specificity of the ClpAP-mediated ATP-dependent protein degradation. In Neisseria meningitidis serogroup A / serotype 4A (strain DSM 15465 / Z2491), this protein is ATP-dependent Clp protease adapter protein ClpS.